The sequence spans 298 residues: MTTTTAEGGGGVAPFVAKTYRMVDDPATDGVIAWGRDSNSFVVADPFAFSQTLLPAHFKHSNFSSFVRQLNTYGFRKVDPDRWEFAHVSFLRGQTHLLRRIVRRSSGGGGAKRKEEAGGCGGGGEAAAGDVDEESAVVALEVARLRREQREIEGRVAAMWRRVQETERRPKQMLAFLVKVVGDPQVLRRLVDRDNTNAAASNADDSAVHHQVKRPRLLLDSSSTTTTHGDRHLVTAAADGFYAGGCGPEAAAAAAFVPDDAVDFTGLYTGGDGFGNAVVDAGVDYPPAYAFPVVDSGY.

The disordered stretch occupies residues 105-128; it reads SSGGGGAKRKEEAGGCGGGGEAAA. The interval 145–181 is hydrophobic repeat HR-A/B; that stretch reads LRREQREIEGRVAAMWRRVQETERRPKQMLAFLVKVV. Residues 213–216 carry the Nuclear localization signal motif; the sequence is KRPR.

This sequence belongs to the HSF family. Class C subfamily. As to quaternary structure, homotrimer. Post-translationally, exhibits temperature-dependent phosphorylation.

The protein localises to the nucleus. In terms of biological role, transcriptional regulator that specifically binds DNA of heat shock promoter elements (HSE). The sequence is that of Heat stress transcription factor C-2a (HSFC2A) from Oryza sativa subsp. japonica (Rice).